A 327-amino-acid polypeptide reads, in one-letter code: DNA-directed RNA polymerase subunit alpha (327 aa).

Positions 1–233 (MVREKVKVST…NLFIPFLHVE (233 aa)) are alpha N-terminal domain (alpha-NTD). The alpha C-terminal domain (alpha-CTD) stretch occupies residues 267–327 (LAFQYIFIDQ…KKILDILEKK (61 aa)).

This sequence belongs to the RNA polymerase alpha chain family. In plastids the minimal PEP RNA polymerase catalytic core is composed of four subunits: alpha, beta, beta', and beta''. When a (nuclear-encoded) sigma factor is associated with the core the holoenzyme is formed, which can initiate transcription.

It localises to the plastid. The protein localises to the chloroplast. The catalysed reaction is RNA(n) + a ribonucleoside 5'-triphosphate = RNA(n+1) + diphosphate. In terms of biological role, DNA-dependent RNA polymerase catalyzes the transcription of DNA into RNA using the four ribonucleoside triphosphates as substrates. This is DNA-directed RNA polymerase subunit alpha from Draba nemorosa (Woodland whitlowgrass).